The primary structure comprises 260 residues: Crotonyl-CoA hydratase (260 aa).

Residue Glu-114 is the Nucleophile of the active site. The active-site Proton acceptor is Glu-134.

This sequence belongs to the enoyl-CoA hydratase/isomerase family. In terms of assembly, homotetramer.

The protein resides in the cytoplasm. The enzyme catalyses 3-hydroxybutanoyl-CoA = (2E)-butenoyl-CoA + H2O. It carries out the reaction a short-chain (3S)-3-hydroxyacyl-CoA = a short-chain (2E)-enoyl-CoA + H2O. The protein operates within lipid metabolism; butanoate metabolism. In terms of biological role, involved in syntrophic growth of S.wolfei with butyrate, as part of the butyrate oxidation pathway. Probably catalyzes the hydration of crotonyl-CoA to 3-hydroxybutyryl-CoA. The polypeptide is Crotonyl-CoA hydratase (Syntrophomonas wolfei subsp. wolfei (strain DSM 2245B / Goettingen)).